We begin with the raw amino-acid sequence, 667 residues long: DNA ligase (667 aa).

NAD(+) contacts are provided by residues 32-36, 81-82, and Glu110; these read DSEYD and SL. Lys112 (N6-AMP-lysine intermediate) is an active-site residue. NAD(+)-binding residues include Arg133, Glu167, Lys283, and Lys307. 4 residues coordinate Zn(2+): Cys401, Cys404, Cys419, and Cys424. In terms of domain architecture, BRCT spans 586–667; sequence EGHPEFSGKT…FVDKQNELNS (82 aa).

This sequence belongs to the NAD-dependent DNA ligase family. LigA subfamily. It depends on Mg(2+) as a cofactor. Requires Mn(2+) as cofactor.

The enzyme catalyses NAD(+) + (deoxyribonucleotide)n-3'-hydroxyl + 5'-phospho-(deoxyribonucleotide)m = (deoxyribonucleotide)n+m + AMP + beta-nicotinamide D-nucleotide.. Functionally, DNA ligase that catalyzes the formation of phosphodiester linkages between 5'-phosphoryl and 3'-hydroxyl groups in double-stranded DNA using NAD as a coenzyme and as the energy source for the reaction. It is essential for DNA replication and repair of damaged DNA. The protein is DNA ligase of Staphylococcus aureus (strain USA300).